We begin with the raw amino-acid sequence, 428 residues long: Protein ECERIFERUM 26 (428 aa).

A disordered region spans residues 1–36; sequence MGRSQEQGQGQGPVHSIRLSTVGATRPTETGTTHEP. The segment covering 21–36 has biased composition (low complexity); that stretch reads TVGATRPTETGTTHEP.

The protein belongs to the plant acyltransferase family. As to expression, highly expressed in leaves.

It localises to the cytoplasm. Its subcellular location is the cytosol. Its function is as follows. Involved in biosynthesis of the epicuticular wax. Plays a role in very-long-chain fatty acid (VLCFA) biosynthesis and is required for C30 fatty acid elongation in leaf. Despite its classification as a BAHD acyltransferase based on sequence homology, CER26 does not seem to share the catalytic mechanism of the members of the BAHD family. This chain is Protein ECERIFERUM 26 (CER26), found in Arabidopsis thaliana (Mouse-ear cress).